Here is a 125-residue protein sequence, read N- to C-terminus: Large ribosomal subunit protein bL12 (125 aa).

It belongs to the bacterial ribosomal protein bL12 family. In terms of assembly, homodimer. Part of the ribosomal stalk of the 50S ribosomal subunit. Forms a multimeric L10(L12)X complex, where L10 forms an elongated spine to which 2 to 4 L12 dimers bind in a sequential fashion. Binds GTP-bound translation factors.

Functionally, forms part of the ribosomal stalk which helps the ribosome interact with GTP-bound translation factors. Is thus essential for accurate translation. This Francisella tularensis subsp. novicida (strain U112) protein is Large ribosomal subunit protein bL12.